Consider the following 174-residue polypeptide: Guided entry of tail-anchored proteins factor 1 (174 aa).

Over 1–8 the chain is Lumenal; the sequence is MSASETDR. Residues 9–29 traverse the membrane as a helical segment; sequence WAWLLVLSFVFGCNLLRILLP. Residues 30-99 are Cytoplasmic-facing; sequence SLSSFISRVL…VKARTAQLAK (70 aa). Residues 39-94 are a coiled coil; it reads LQKDAEQESQMRAEIQGMKQELSTVNMMDEFARYARLERKINKMTDKLKTHVKART. Positions 39-97 are interaction with GET3/TRC40; it reads LQKDAEQESQMRAEIQGMKQELSTVNMMDEFARYARLERKINKMTDKLKTHVKARTAQL. Residues 100 to 120 traverse the membrane as a helical segment; it reads IKWFISVAFYILQAALMISLI. Topologically, residues 121 to 148 are lumenal; sequence WKYYSVPVAVVPSKWITPLDRLVAFPTR. A helical transmembrane segment spans residues 149 to 169; sequence VAGGIGITCWILVCNKVVAIV. Residues 170–174 are Cytoplasmic-facing; it reads LHPFS.

It belongs to the WRB/GET1 family. In terms of assembly, component of the Golgi to ER traffic (GET) complex, which is composed of GET1, CAMLG/GET2 and GET3. Within the complex, GET1 and CAMLG form a heterotetramer which is stabilized by phosphatidylinositol binding and which binds to the GET3 homodimer. Interacts with CAMLG/GET2 (via C-terminus). GET3 shows a higher affinity for CAMLG than for GET1.

Its subcellular location is the endoplasmic reticulum membrane. Required for the post-translational delivery of tail-anchored (TA) proteins to the endoplasmic reticulum. Together with CAMLG/GET2, acts as a membrane receptor for soluble GET3/TRC40, which recognizes and selectively binds the transmembrane domain of TA proteins in the cytosol. Required to ensure correct topology and ER insertion of CAMLG. The protein is Guided entry of tail-anchored proteins factor 1 of Mus musculus (Mouse).